The primary structure comprises 1612 residues: DNA topoisomerase 2-beta (1612 aa).

Ala2 carries the post-translational modification N-acetylalanine. N6-acetyllysine is present on Lys3. Residues Lys21 and Lys22 each participate in a glycyl lysine isopeptide (Lys-Gly) (interchain with G-Cter in SUMO2) cross-link. Residues Asn100, Asn129, and 157-159 (SSN) contribute to the ATP site. Glycyl lysine isopeptide (Lys-Gly) (interchain with G-Cter in SUMO2) cross-links involve residues Lys165 and Lys166. 170 to 177 (GRNGYGAK) is an ATP binding site. Residues Lys216 and Lys287 each participate in a glycyl lysine isopeptide (Lys-Gly) (interchain with G-Cter in SUMO2) cross-link. Residues 351-353 (KKK) are interaction with DNA. Residues Lys355 and Lys361 each participate in a glycyl lysine isopeptide (Lys-Gly) (interchain with G-Cter in SUMO2) cross-link. 385-387 (QTK) lines the ATP pocket. Glycyl lysine isopeptide (Lys-Gly) (interchain with G-Cter in SUMO2) cross-links involve residues Lys425, Lys427, and Lys434. A Toprim domain is found at 464-581 (CTLILTEGDS…SLLKHGFLEE (118 aa)). Residues Glu470, Asp550, and Asp552 each contribute to the Mg(2+) site. Residues Lys588, Lys593, Lys623, Lys631, Lys634, Lys664, and Lys700 each participate in a glycyl lysine isopeptide (Lys-Gly) (interchain with G-Cter in SUMO2) cross-link. The region spanning 724 to 1177 (IPSLVDGFKP…SPSDLWKEDL (454 aa)) is the Topo IIA-type catalytic domain. Tyr814 (O-(5'-phospho-DNA)-tyrosine intermediate) is an active-site residue. Positions 999-1008 (KLQTTLTCNS) are interaction with DNA. Lys1080 is covalently cross-linked (Glycyl lysine isopeptide (Lys-Gly) (interchain with G-Cter in SUMO2)). The segment at 1098 to 1128 (AWKEAQEKAAEEEDSQNQHDDSSSDSGTPSG) is disordered. Glycyl lysine isopeptide (Lys-Gly) (interchain with G-Cter in SUMO2) cross-links involve residues Lys1202, Lys1205, Lys1214, and Lys1215. A Phosphoserine modification is found at Ser1224. Residues Lys1238, Lys1250, and Lys1259 each participate in a glycyl lysine isopeptide (Lys-Gly) (interchain with G-Cter in SUMO2) cross-link. The disordered stretch occupies residues 1245–1586 (LLKKKKGDPD…FTSEPPALPR (342 aa)). Thr1280 is subject to Phosphothreonine. Residues Lys1311 and Lys1315 each participate in a glycyl lysine isopeptide (Lys-Gly) (interchain with G-Cter in SUMO2) cross-link. Composition is skewed to basic and acidic residues over residues 1322-1332 (PWSDDESKSES) and 1346-1358 (SLLRRAAAERPKY). Phosphoserine occurs at positions 1324, 1328, 1330, 1332, and 1346. Phosphotyrosine is present on Tyr1358. Over residues 1362-1379 (FSEEEDDDAAAADDSNDL) the composition is skewed to acidic residues. Phosphoserine occurs at positions 1363 and 1376. A Glycyl lysine isopeptide (Lys-Gly) (interchain with G-Cter in SUMO2) cross-link involves residue Lys1385. Ser1387 bears the Phosphoserine mark. Residue Thr1390 is modified to Phosphothreonine. Ser1400 carries the phosphoserine modification. A Phosphotyrosine modification is found at Tyr1408. Position 1411 is a phosphoserine (Ser1411). A compositionally biased stretch (basic and acidic residues) spans 1417–1429 (ATPEKSSNDKKSQ). Lys1427 participates in a covalent cross-link: Glycyl lysine isopeptide (Lys-Gly) (interchain with G-Cter in SUMO2). A phosphoserine mark is found at Ser1428, Ser1439, and Ser1441. Lys1443 is covalently cross-linked (Glycyl lysine isopeptide (Lys-Gly) (interchain with G-Cter in SUMO2)). Positions 1443–1453 (KSEDDSAKFDS) are enriched in basic and acidic residues. Phosphoserine occurs at positions 1448, 1453, and 1460. Residue Lys1477 forms a Glycyl lysine isopeptide (Lys-Gly) (interchain with G-Cter in SUMO2) linkage. Positions 1493–1499 (KAKRAPK) are interaction with PLSCR1. Phosphoserine is present on residues Ser1509, Ser1511, and Ser1513. Residues 1526-1536 (GKGRGAKKRKA) are compositionally biased toward basic residues. 2 positions are modified to phosphoserine: Ser1537 and Ser1539. Positions 1550 to 1561 (KPSKTASKKPKK) are enriched in basic residues. At Thr1562 the chain carries Phosphothreonine. Phosphoserine occurs at positions 1563 and 1568. The residue at position 1596 (Tyr1596) is a Phosphotyrosine. Ser1600 carries the phosphoserine modification.

The protein belongs to the type II topoisomerase family. As to quaternary structure, homodimer. Interacts with KIAA1210. Interacts with PLSCR1. Mg(2+) is required as a cofactor. Requires Mn(2+) as cofactor. The cofactor is Ca(2+).

It is found in the nucleus. The protein localises to the nucleolus. It localises to the nucleoplasm. The catalysed reaction is ATP-dependent breakage, passage and rejoining of double-stranded DNA.. In terms of biological role, key decatenating enzyme that alters DNA topology by binding to two double-stranded DNA molecules, generating a double-stranded break in one of the strands, passing the intact strand through the broken strand, and religating the broken strand. Plays a role in B-cell differentiation. This Mus musculus (Mouse) protein is DNA topoisomerase 2-beta (Top2b).